Reading from the N-terminus, the 95-residue chain is MNFVIIIAILLLGISLILAFTVLNKSKSKTTMAYKRAQEEKIDTEIKMLKNLKNNVCSGASDEIIDNILNSENNILKEALKNNLDDADVCKKLRR.

The chain crosses the membrane as a helical span at residues 3–23; it reads FVIIIAILLLGISLILAFTVL.

It is found in the membrane. This is an uncharacterized protein from Methanocaldococcus jannaschii (strain ATCC 43067 / DSM 2661 / JAL-1 / JCM 10045 / NBRC 100440) (Methanococcus jannaschii).